A 215-amino-acid chain; its full sequence is S-crystallin 2 (215 aa).

The GST N-terminal domain maps to Pro-2–Gly-80. Residues Asn-82–Phe-215 enclose the GST C-terminal domain.

Belongs to the GST superfamily. Lens.

Functionally, S-crystallins are structural components of squids and octopi eye lens. Contains relatively little GST activity (1/1000 of that of mammalian GST enzyme). The sequence is that of S-crystallin 2 (OCTS2) from Octopus vulgaris (Common octopus).